Here is a 224-residue protein sequence, read N- to C-terminus: MADNMDFKDLMADEAEDIIEKDIARVNQASEDIDQENQSEVVDDTTENEDASEEVYEEDTASEDGSKEKKSFFKKKEKKDKKDEKIDELTDRLMRNMAEFENFRKRTEKEKTQMFEVGAKDIIERILPVIDNFERGLAAVSVEEKDSAFVQGIEKIYKQLVTTLEAAGVKQIEAAGKEFDPDFHNAVMHAEDEEYGENIVAEEFQKGYMYRETVVRHSMVKVVN.

Positions Asn27–Glu77 are disordered. Residues Glu31 to Ser62 are compositionally biased toward acidic residues.

The protein belongs to the GrpE family. Homodimer.

The protein localises to the cytoplasm. Its function is as follows. Participates actively in the response to hyperosmotic and heat shock by preventing the aggregation of stress-denatured proteins, in association with DnaK and GrpE. It is the nucleotide exchange factor for DnaK and may function as a thermosensor. Unfolded proteins bind initially to DnaJ; upon interaction with the DnaJ-bound protein, DnaK hydrolyzes its bound ATP, resulting in the formation of a stable complex. GrpE releases ADP from DnaK; ATP binding to DnaK triggers the release of the substrate protein, thus completing the reaction cycle. Several rounds of ATP-dependent interactions between DnaJ, DnaK and GrpE are required for fully efficient folding. This Lachnoclostridium phytofermentans (strain ATCC 700394 / DSM 18823 / ISDg) (Clostridium phytofermentans) protein is Protein GrpE.